We begin with the raw amino-acid sequence, 270 residues long: MLVHPQFDPVAIHLGPLAIRWYGLMYLAGFIMFLWFGRLRIRQPHIAARGWVARDLDDMLFYGVLGVILGGRLGYVLFYKPGYYLTHPLEIFKVWEGGMAFHGGFLGVLIAMWVFAKVRRRHWMEVTDFIAPMIPCGLAAGRIGNFINGELWGRPTDLPWGMIFPQAGDNIPRHPSQLYQFAGEGVALFIILWLFSRKPRPMGAVSGVFLIGYGAFRFLAEFAREPDNFLGLLALKLSMGQWLSLPMIVIGAVMVVWAYRRGNGATAAAR.

7 helical membrane passes run 17 to 37 (LAIR…LWFG), 59 to 79 (MLFY…VLFY), 95 to 115 (WEGG…MWVF), 129 to 149 (FIAP…FING), 175 to 195 (PSQL…LWLF), 202 to 222 (MGAV…LAEF), and 237 to 257 (LSMG…MVVW). A 1,2-diacyl-sn-glycero-3-phospho-(1'-sn-glycerol) is bound at residue Arg142.

Belongs to the Lgt family.

Its subcellular location is the cell inner membrane. The enzyme catalyses L-cysteinyl-[prolipoprotein] + a 1,2-diacyl-sn-glycero-3-phospho-(1'-sn-glycerol) = an S-1,2-diacyl-sn-glyceryl-L-cysteinyl-[prolipoprotein] + sn-glycerol 1-phosphate + H(+). The protein operates within protein modification; lipoprotein biosynthesis (diacylglyceryl transfer). Functionally, catalyzes the transfer of the diacylglyceryl group from phosphatidylglycerol to the sulfhydryl group of the N-terminal cysteine of a prolipoprotein, the first step in the formation of mature lipoproteins. In Cupriavidus metallidurans (strain ATCC 43123 / DSM 2839 / NBRC 102507 / CH34) (Ralstonia metallidurans), this protein is Phosphatidylglycerol--prolipoprotein diacylglyceryl transferase.